A 503-amino-acid chain; its full sequence is L-amino-acid oxidase (503 aa).

The first 18 residues, methionine 1–cysteine 18, serve as a signal peptide directing secretion. Cysteine 28 and cysteine 191 are oxidised to a cystine. FAD-binding positions include methionine 61–serine 62, glutamate 81–alanine 82, arginine 89, and glycine 105–arginine 108. A substrate-binding site is contributed by arginine 108. Residue asparagine 190 is glycosylated (N-linked (GlcNAc...) asparagine). Histidine 241 serves as a coordination point for substrate. Residue valine 279 participates in FAD binding. Cysteines 349 and 430 form a disulfide. Tyrosine 390 contacts substrate. FAD contacts are provided by residues glutamate 475 and glycine 482–threonine 487. Glycine 482 to tryptophan 483 serves as a coordination point for substrate.

This sequence belongs to the flavin monoamine oxidase family. FIG1 subfamily. In terms of assembly, homodimer; non-covalently linked. It depends on FAD as a cofactor. In terms of processing, N-glycosylated. The enzymatic activity is not affected by deglycosylation. As to expression, expressed by the venom gland.

The protein localises to the secreted. The enzyme catalyses an L-alpha-amino acid + O2 + H2O = a 2-oxocarboxylate + H2O2 + NH4(+). It carries out the reaction L-leucine + O2 + H2O = 4-methyl-2-oxopentanoate + H2O2 + NH4(+). The catalysed reaction is L-phenylalanine + O2 + H2O = 3-phenylpyruvate + H2O2 + NH4(+). It catalyses the reaction L-methionine + O2 + H2O = 4-methylsulfanyl-2-oxobutanoate + H2O2 + NH4(+). The enzyme catalyses L-isoleucine + O2 + H2O = (S)-3-methyl-2-oxopentanoate + H2O2 + NH4(+). Catalyzes an oxidative deamination of predominantly hydrophobic and aromatic L-amino acids, thus producing hydrogen peroxide that may contribute to the diverse toxic effects of this enzyme. Is highly active on L-Met, L-Leu, L-Phe and L-Ile. Exhibits diverse biological activities, such as antibacterial on both Gram-positive and Gram-negative bacteria and antiparasitic activities, as well as induction of platelet aggregation. Effects of snake L-amino oxidases on platelets are controversial, since they either induce aggregation or inhibit agonist-induced aggregation. These different effects are probably due to different experimental conditions. This protein may also have activities in hemorrhage, hemolysis, edema, and apoptosis. The sequence is that of L-amino-acid oxidase from Bothrops pauloensis (Neuwied's lancehead).